Consider the following 200-residue polypeptide: RPW8-like protein 4 (200 aa).

Positions 1 to 157 constitute an RPW8 domain; sequence MPIAELAVIK…MKAIQVDQWT (157 aa). Residues 7–29 traverse the membrane as a helical segment; the sequence is AVIKTVGGPLIAAALGVGAQVIY. The stretch at 70–127 forms a coiled coil; that stretch reads REVHESLTRLLEDAKSIIEKYWKLRWSRHVCRKYRYIKKLESIELELVRVAREIQVHQ.

This sequence belongs to the plant RPW8 protein family.

It is found in the membrane. Its function is as follows. Probable disease resistance (R) protein. The chain is RPW8-like protein 4 (HR4) from Arabidopsis thaliana (Mouse-ear cress).